The chain runs to 246 residues: Phycobilisome rod-core linker polypeptide CpcG2 (246 aa).

One can recognise a PBS-linker domain in the interval 11-189 (SSQNQRVAGY…YWRDKLENSR (179 aa)). Residues 224–246 (DTTRRDRPTVPASINPTASFPLR) are disordered. Residues 235-246 (ASINPTASFPLR) are compositionally biased toward polar residues.

It belongs to the phycobilisome linker protein family. The phycobilisome is a hemidiscoidal structure that is composed of two distinct substructures: a core complex and a number of rods radiating from the core.

It is found in the cellular thylakoid membrane. Functionally, rod-core linker protein required for attachment of phycocyanin to allophycocyanin in cores of phycobilisomes. Linker polypeptides determine the state of aggregation and the location of the disk-shaped phycobiliprotein units within the phycobilisome and modulate their spectroscopic properties in order to mediate a directed and optimal energy transfer. In Thermosynechococcus vestitus (strain NIES-2133 / IAM M-273 / BP-1), this protein is Phycobilisome rod-core linker polypeptide CpcG2 (cpcG2).